The primary structure comprises 393 residues: Sulfate adenylyltransferase (393 aa).

It belongs to the sulfate adenylyltransferase family.

The enzyme catalyses sulfate + ATP + H(+) = adenosine 5'-phosphosulfate + diphosphate. Its pathway is sulfur metabolism; hydrogen sulfide biosynthesis; sulfite from sulfate: step 1/3. This chain is Sulfate adenylyltransferase, found in Symbiobacterium thermophilum (strain DSM 24528 / JCM 14929 / IAM 14863 / T).